Here is a 282-residue protein sequence, read N- to C-terminus: Phosphatidylserine decarboxylase proenzyme (282 aa).

Residues D88, H144, and S247 each act as charge relay system; for autoendoproteolytic cleavage activity in the active site. S247 (schiff-base intermediate with substrate; via pyruvic acid; for decarboxylase activity) is an active-site residue. S247 is modified (pyruvic acid (Ser); by autocatalysis).

Belongs to the phosphatidylserine decarboxylase family. PSD-B subfamily. Prokaryotic type I sub-subfamily. As to quaternary structure, heterodimer of a large membrane-associated beta subunit and a small pyruvoyl-containing alpha subunit. Pyruvate is required as a cofactor. Post-translationally, is synthesized initially as an inactive proenzyme. Formation of the active enzyme involves a self-maturation process in which the active site pyruvoyl group is generated from an internal serine residue via an autocatalytic post-translational modification. Two non-identical subunits are generated from the proenzyme in this reaction, and the pyruvate is formed at the N-terminus of the alpha chain, which is derived from the carboxyl end of the proenzyme. The autoendoproteolytic cleavage occurs by a canonical serine protease mechanism, in which the side chain hydroxyl group of the serine supplies its oxygen atom to form the C-terminus of the beta chain, while the remainder of the serine residue undergoes an oxidative deamination to produce ammonia and the pyruvoyl prosthetic group on the alpha chain. During this reaction, the Ser that is part of the protease active site of the proenzyme becomes the pyruvoyl prosthetic group, which constitutes an essential element of the active site of the mature decarboxylase.

Its subcellular location is the cell membrane. The catalysed reaction is a 1,2-diacyl-sn-glycero-3-phospho-L-serine + H(+) = a 1,2-diacyl-sn-glycero-3-phosphoethanolamine + CO2. It participates in phospholipid metabolism; phosphatidylethanolamine biosynthesis; phosphatidylethanolamine from CDP-diacylglycerol: step 2/2. Functionally, catalyzes the formation of phosphatidylethanolamine (PtdEtn) from phosphatidylserine (PtdSer). The sequence is that of Phosphatidylserine decarboxylase proenzyme from Xanthomonas oryzae pv. oryzae (strain MAFF 311018).